A 355-amino-acid chain; its full sequence is G protein alpha i subunit (355 aa).

Gly2 is lipidated: N-myristoyl glycine. Cys3 carries S-palmitoyl cysteine lipidation. In terms of domain architecture, G-alpha spans 33–355 (SEVKLLLLGA…KNNLKQIGLF (323 aa)). The tract at residues 36 to 49 (KLLLLGAGESGKST) is G1 motif. GTP is bound by residues 41 to 48 (GAGESGKS), 176 to 182 (LRTRVKT), 201 to 205 (DVGGQ), 270 to 273 (NKKD), and Ala327. Positions 48 and 182 each coordinate Mg(2+). Residues 174–182 (DVLRTRVKT) are G2 motif. A G3 motif region spans residues 197–206 (FKLFDVGGQR). Positions 266–273 (ILFLNKKD) are G4 motif. Residues 325–330 (TCATDT) form a G5 motif region.

Belongs to the G-alpha family. G(i/o/t/z) subfamily. As to quaternary structure, g proteins are composed of 3 units; alpha, beta and gamma. The alpha chain contains the guanine nucleotide binding site. Interacts (via GDP- or GTP-bound forms) with loco (via GoLoco and RGS domains). Interacts with raps/pins.

It localises to the cell membrane. It is found in the apical cell membrane. Its function is as follows. Guanine nucleotide-binding proteins (G proteins) are involved as modulators or transducers in various transmembrane signaling systems. Plays a role in glial cell differentiation during embryogenesis; loco, Galphao and the G-protein coupled receptor, moody, are required in the surface glia to achieve effective insulation of the nerve cord. In Drosophila melanogaster (Fruit fly), this protein is G protein alpha i subunit (Galphai).